A 500-amino-acid chain; its full sequence is Beta-glucosidase 28 (500 aa).

Residues 1–24 (MDRRLLLSALLFIALACSSNRVHG) form the signal peptide. Gln45 is a binding site for a beta-D-glucoside. A glycan (N-linked (GlcNAc...) asparagine) is linked at Asn111. Residues His146 and 191 to 192 (NE) contribute to the a beta-D-glucoside site. Glu192 functions as the Proton donor in the catalytic mechanism. A disulfide bridge links Cys211 with Cys219. Position 337 (Tyr337) interacts with a beta-D-glucoside. The N-linked (GlcNAc...) asparagine glycan is linked to Asn362. Glu408 is a binding site for a beta-D-glucoside. Glu408 (nucleophile) is an active-site residue. N-linked (GlcNAc...) asparagine glycans are attached at residues Asn409, Asn415, and Asn416. Residues Trp457, 464 to 465 (EF), and Phe473 contribute to the a beta-D-glucoside site.

Belongs to the glycosyl hydrolase 1 family.

It catalyses the reaction Hydrolysis of terminal, non-reducing beta-D-glucosyl residues with release of beta-D-glucose.. The sequence is that of Beta-glucosidase 28 (BGLU28) from Oryza sativa subsp. japonica (Rice).